We begin with the raw amino-acid sequence, 100 residues long: MELTPREKDKLLLFTAGLVAERRRARGLKLNYPEAIALISCEIMEGARDGRTVAELMSYGRTILTAEDVMEGVPEMITDIQVECTFPDGTKLVSIHDPIV.

This sequence belongs to the urease gamma subunit family. In terms of assembly, heterotrimer of UreA (gamma), UreB (beta) and UreC (alpha) subunits. Three heterotrimers associate to form the active enzyme.

It localises to the cytoplasm. It catalyses the reaction urea + 2 H2O + H(+) = hydrogencarbonate + 2 NH4(+). The protein operates within nitrogen metabolism; urea degradation; CO(2) and NH(3) from urea (urease route): step 1/1. The protein is Urease subunit gamma of Vibrio parahaemolyticus.